The sequence spans 336 residues: Ornithine carbamoyltransferase, catabolic (336 aa).

Carbamoyl phosphate contacts are provided by residues 57 to 60 (STRT), Gln-84, Arg-108, and 135 to 138 (HPTQ). L-ornithine contacts are provided by residues Asn-168, Asp-232, and 236–237 (SM). Carbamoyl phosphate-binding positions include 274–275 (CL) and Arg-321.

The protein belongs to the aspartate/ornithine carbamoyltransferase superfamily. OTCase family.

It localises to the cytoplasm. The enzyme catalyses carbamoyl phosphate + L-ornithine = L-citrulline + phosphate + H(+). The protein operates within amino-acid degradation; L-arginine degradation via ADI pathway; carbamoyl phosphate from L-arginine: step 2/2. Reversibly catalyzes the transfer of the carbamoyl group from carbamoyl phosphate (CP) to the N(epsilon) atom of ornithine (ORN) to produce L-citrulline. This is Ornithine carbamoyltransferase, catabolic from Burkholderia mallei (strain ATCC 23344).